We begin with the raw amino-acid sequence, 296 residues long: MKIIVPATSANLGAGFDSIGIAVSLYLTVEVLEESSDWKIDHDLGENIPTDERNLLLTTLSAVLEDKNVALPAKYHLKMTSEVPLARGLGSSSSVIIAGIELANQLAKLNLTSDEKLKLACEIEGHPDNVAPALLGNLVIASTVAGKTSHIVADFPSCALLAFVPDYELKTVESRQVLPNELTYKEAVAASSIANVLTASLLTNNLEVAGQMMEADRFHESYRASLIPELQLLREIGHEFGAYGTYLSGAGPTVMLLVPDNKLTLLTEKIMEKNLTGHLYPLKIDNKGLQVEESVF.

An ATP-binding site is contributed by 84–94 (PLARGLGSSSS).

It belongs to the GHMP kinase family. Homoserine kinase subfamily.

Its subcellular location is the cytoplasm. It carries out the reaction L-homoserine + ATP = O-phospho-L-homoserine + ADP + H(+). Its pathway is amino-acid biosynthesis; L-threonine biosynthesis; L-threonine from L-aspartate: step 4/5. In terms of biological role, catalyzes the ATP-dependent phosphorylation of L-homoserine to L-homoserine phosphate. This chain is Homoserine kinase, found in Lactococcus lactis subsp. cremoris (strain SK11).